The primary structure comprises 157 residues: Pyruvoyl-dependent arginine decarboxylase (157 aa).

Serine 44 is subject to Pyruvic acid (Ser).

Belongs to the PdaD family. Requires pyruvate as cofactor.

It catalyses the reaction L-arginine + H(+) = agmatine + CO2. The chain is Pyruvoyl-dependent arginine decarboxylase from Thermococcus kodakarensis (strain ATCC BAA-918 / JCM 12380 / KOD1) (Pyrococcus kodakaraensis (strain KOD1)).